A 128-amino-acid polypeptide reads, in one-letter code: Ribonuclease P protein component 4 (128 aa).

Zn(2+)-binding residues include Cys-63, Cys-66, Cys-92, and Cys-95.

Belongs to the eukaryotic/archaeal RNase P protein component 4 family. As to quaternary structure, consists of a catalytic RNA component and at least 4 protein subunits. Forms a subcomplex with Rnp1 which stimulates the catalytic RNA. Zn(2+) is required as a cofactor.

The protein resides in the cytoplasm. The catalysed reaction is Endonucleolytic cleavage of RNA, removing 5'-extranucleotides from tRNA precursor.. Part of ribonuclease P, a protein complex that generates mature tRNA molecules by cleaving their 5'-ends. This is Ribonuclease P protein component 4 from Methanocaldococcus jannaschii (strain ATCC 43067 / DSM 2661 / JAL-1 / JCM 10045 / NBRC 100440) (Methanococcus jannaschii).